Reading from the N-terminus, the 451-residue chain is Trigger factor (451 aa).

One can recognise a PPIase FKBP-type domain in the interval 165 to 250 (DDKLTIDFEG…LRQIQAREAL (86 aa)).

It belongs to the FKBP-type PPIase family. Tig subfamily.

The protein resides in the cytoplasm. The enzyme catalyses [protein]-peptidylproline (omega=180) = [protein]-peptidylproline (omega=0). Involved in protein export. Acts as a chaperone by maintaining the newly synthesized protein in an open conformation. Functions as a peptidyl-prolyl cis-trans isomerase. This is Trigger factor from Helicobacter pylori (strain Shi470).